Reading from the N-terminus, the 359-residue chain is Probably inactive receptor-like protein kinase At5g41680 (359 aa).

In terms of domain architecture, Protein kinase spans 59 to 357; sequence AASAEILGKG…KLIQDIPTNF (299 aa). Residues 65–73 and lysine 87 contribute to the ATP site; that span reads LGKGAHVTT.

The protein belongs to the protein kinase superfamily. Ser/Thr protein kinase family.

This chain is Probably inactive receptor-like protein kinase At5g41680, found in Arabidopsis thaliana (Mouse-ear cress).